The primary structure comprises 44 residues: Antimicrobial peptide 2 (44 aa).

In terms of processing, disulfide bonds. In terms of tissue distribution, expressed in flowers but not in leaves, seeds or roots (at protein level).

Antimicrobial peptide. Active against fungal species B.cinerea (IC(50)=5.2 uM), A.niger (IC(50)=2.6 uM) and B.sorokinina (IC(50)=5.2 uM) but not against F.oxysporum, F.graminearum and P.debaryanum at concentrations below 10 uM. Inhibits growth of P.infestans at concentration between 1.3 uM and 5.2 uM. Active against bacterial species P.syringae, B.subtilis, X.campestris and C.michiganense. This is Antimicrobial peptide 2 from Taraxacum officinale (Common dandelion).